Consider the following 88-residue polypeptide: Kunitz-type U15-theraphotoxin-Hs1e (88 aa).

Residues M1–A27 form the signal peptide. Residues E28 to R33 constitute a propeptide that is removed on maturation. The BPTI/Kunitz inhibitor domain occupies C37 to C85. 2 disulfides stabilise this stretch: C37–C85 and C60–C81.

The protein belongs to the venom Kunitz-type family. 03 (sub-Kunitz) subfamily. As to expression, expressed by the venom gland.

The protein resides in the secreted. Serine protease inhibitor that inhibits trypsin (Ki=9.61 nM), kallikrein (Ki=24.8 nM), and chymotrypsin. This is Kunitz-type U15-theraphotoxin-Hs1e from Cyriopagopus schmidti (Chinese bird spider).